The chain runs to 354 residues: Protein RecA (354 aa).

78 to 85 provides a ligand contact to ATP; that stretch reads GPESSGKT.

This sequence belongs to the RecA family.

Its subcellular location is the cytoplasm. Its function is as follows. Can catalyze the hydrolysis of ATP in the presence of single-stranded DNA, the ATP-dependent uptake of single-stranded DNA by duplex DNA, and the ATP-dependent hybridization of homologous single-stranded DNAs. It interacts with LexA causing its activation and leading to its autocatalytic cleavage. This chain is Protein RecA, found in Zymomonas mobilis subsp. mobilis (strain ATCC 31821 / ZM4 / CP4).